The sequence spans 471 residues: U1 small nuclear ribonucleoprotein 70 kDa (471 aa).

A disordered region spans residues 48-78 (FEDPRDAPPPTRAETREERMERKRREKIERR). Positions 60–78 (AETREERMERKRREKIERR) are enriched in basic and acidic residues. Residues 92–205 (HNDQNAQGDA…GGGLGGTRRG (114 aa)) form a required for interaction with U1 RNA region. The RRM domain maps to 103–184 (KTLFVARVNY…RRVLVDVERG (82 aa)). The segment at 190–471 (WRPRRLGGGL…NGYMMEPPME (282 aa)) is disordered. The segment covering 195-204 (LGGGLGGTRR) has biased composition (gly residues). Basic and acidic residues predominate over residues 210–246 (NIRHSGRDDTSRYDERDRERERDRRERSREREKEPRE). The span at 247 to 261 (RRRSRSRERRRKSRS) shows a compositional bias: basic residues. Basic and acidic residues predominate over residues 262–288 (REKEERKRTREKSKDKDKEKDKDNKDR). The span at 289–298 (DRKRRSRSRE) shows a compositional bias: basic residues. Positions 299–316 (RKRERDRDREKKEERVEA) are enriched in basic and acidic residues. Residues 317–326 (EVPEADDAPQ) show a composition bias toward acidic residues. The segment covering 339–428 (IELKQEPEEK…RSEKREERVP (90 aa)) has biased composition (basic and acidic residues).

Component of the U1 snRNP. The U1 snRNP is composed of the U1 snRNA and the 7 core Sm proteins snrpb, snrpd1, snrpd2, snrpd3, snrpe, snrpf and snrpg that assemble in a heptameric protein ring on the Sm site of the small nuclear RNA to form the core snRNP, and at least three U1 snRNP-specific proteins snrnp70/U1-70K, snrpa/U1-A and snrpc/U1-C.

Its subcellular location is the nucleus speckle. It is found in the nucleus. It localises to the nucleoplasm. Its function is as follows. Component of the spliceosomal U1 snRNP, which is essential for recognition of the pre-mRNA 5' splice-site and the subsequent assembly of the spliceosome. snrnp70 binds to the loop I region of U1-snRNA. This Xenopus laevis (African clawed frog) protein is U1 small nuclear ribonucleoprotein 70 kDa (snrnp70).